A 520-amino-acid polypeptide reads, in one-letter code: Sodium-dependent dicarboxylate transporter SdcS (520 aa).

The next 14 membrane-spanning stretches (helical) occupy residues 30–50, 55–75, 77–97, 104–124, 160–180, 207–227, 242–262, 298–318, 323–343, 362–382, 399–419, 428–448, 452–472, and 491–511; these read AGQL…LLFF, LPWK…WWIT, AIPI…GHIL, SEYG…AIAM, SMFV…LAII, IGYA…PLII, FAKW…ITWL, KVVQ…EFLL, VTSS…LFII, ELPW…KGIS, GVSP…LTEV, MILP…LLLM, AMAA…AIIF, and LISA…VLGI.

The protein belongs to the SLC13A/DASS transporter (TC 2.A.47) family. NADC subfamily.

It is found in the cell membrane. Functionally, mediates the transport of the dicarboxylates fumarate, malate, and succinate across the cytoplasmic membrane via a Na(+)-electrochemical gradient. This chain is Sodium-dependent dicarboxylate transporter SdcS (sdcS), found in Staphylococcus aureus (strain NCTC 8325 / PS 47).